A 431-amino-acid chain; its full sequence is Glutamate-1-semialdehyde 2,1-aminomutase 1 (431 aa).

Lys-268 bears the N6-(pyridoxal phosphate)lysine mark.

This sequence belongs to the class-III pyridoxal-phosphate-dependent aminotransferase family. HemL subfamily. In terms of assembly, homodimer. Requires pyridoxal 5'-phosphate as cofactor.

It is found in the cytoplasm. It catalyses the reaction (S)-4-amino-5-oxopentanoate = 5-aminolevulinate. It participates in porphyrin-containing compound metabolism; protoporphyrin-IX biosynthesis; 5-aminolevulinate from L-glutamyl-tRNA(Glu): step 2/2. In Anoxybacillus flavithermus (strain DSM 21510 / WK1), this protein is Glutamate-1-semialdehyde 2,1-aminomutase 1.